A 427-amino-acid polypeptide reads, in one-letter code: Glutamate-1-semialdehyde 2,1-aminomutase (427 aa).

K265 is modified (N6-(pyridoxal phosphate)lysine).

This sequence belongs to the class-III pyridoxal-phosphate-dependent aminotransferase family. HemL subfamily. As to quaternary structure, homodimer. Requires pyridoxal 5'-phosphate as cofactor.

The protein resides in the cytoplasm. The enzyme catalyses (S)-4-amino-5-oxopentanoate = 5-aminolevulinate. It functions in the pathway porphyrin-containing compound metabolism; protoporphyrin-IX biosynthesis; 5-aminolevulinate from L-glutamyl-tRNA(Glu): step 2/2. This chain is Glutamate-1-semialdehyde 2,1-aminomutase, found in Burkholderia cenocepacia (strain ATCC BAA-245 / DSM 16553 / LMG 16656 / NCTC 13227 / J2315 / CF5610) (Burkholderia cepacia (strain J2315)).